Here is a 77-residue protein sequence, read N- to C-terminus: NEDD8-like protein RUB1 (77 aa).

Positions 1 to 74 constitute a Ubiquitin-like domain; sequence MIVKVKTLTG…MQLHLVLTLR (74 aa). Glycine 76 participates in a covalent cross-link: Glycyl lysine isopeptide (Gly-Lys) (interchain with K-? in acceptor proteins). A propeptide is located at residue asparagine 77.

Interacts with CDC53 and DCN1.

Its function is as follows. Ubiquitin-like protein modifier that can be covalently attached to lysine residues of target proteins. Activated by the dimeric UBA3-ULA1 E1 enzyme and conjugated by the E2 UBC12 to substrate proteins. RUB1-conjugated (neddylated) substrate proteins include the cullins CDC53, RTT101 and CUL3, and the modification enhances the ubiquitin-ligase activity of the corresponding cullin-RING-based E3 ubiquitin-protein ligase complexes (CRLs). In Saccharomyces cerevisiae (strain ATCC 204508 / S288c) (Baker's yeast), this protein is NEDD8-like protein RUB1 (RUB1).